We begin with the raw amino-acid sequence, 148 residues long: Puroindoline-A (148 aa).

Residues 1–19 (MKALFLIGLLALVASTAFA) form the signal peptide. The propeptide occupies 20–28 (QYSEVVGSY). Positions 147-148 (YW) are cleaved as a propeptide — removed in mature form.

Five disulfide bonds are present. In terms of tissue distribution, endosperm and aleurone layer of developing kernels. In the aleurone layer, mainly localized to starch granules and the surface of the plasma membrane, forming a uniform layer, also abundant in the intercellular space. In the endosperm, mainly localized to starch granules and the plasma membrane, but less abundant in the intercellular space. Not found in roots or coleoptiles.

The protein localises to the membrane. It is found in the secreted. It localises to the extracellular space. Acts as a membranotoxin, probably through its antibacterial and antifungal activities, contributing to the defense mechanism of the plant against predators. Forms monovalent cation-selective ion channels in membranes. Has antibacterial activity against the Gram-positive bacteria S.aureus and C.michiganensis, and the Gram-negative bacteria E.coli, P.syringae pv phaseoli, A.tumefaciens and E.carotovora subsp carotovora. Acts synergistically with PINB against bacteria. Contributes to grain texture and hardness. The chain is Puroindoline-A (PINA) from Triticum aestivum (Wheat).